The following is a 915-amino-acid chain: WD repeat-containing protein 44 (915 aa).

Acidic residues predominate over residues Met1–Pro14. The tract at residues Met1–Pro24 is disordered. N-acetylalanine is present on Ala2. Residues Ala2 to Gly173 form a binding activity region. Position 3 is a phosphoserine (Ser3). An FFAT-like motif motif is present at residues Glu9–Glu15. A Phosphotyrosine modification is found at Tyr11. 6 positions are modified to phosphoserine: Ser27, Ser50, Ser66, Ser71, Ser81, and Ser126. 3 disordered regions span residues Asp79–Thr102, Leu117–Leu174, and Val208–Asn282. The stretch at Glu114–Lys139 forms a coiled coil. A compositionally biased stretch (basic and acidic residues) spans Thr146–Asp155. A phosphothreonine mark is found at Thr161 and Thr221. An important for interaction with ARHGAP26 AND ARHGAP10 region spans residues Pro213–Pro259. Over residues Pro235–Pro258 the composition is skewed to pro residues. Residue Ser264 is modified to Phosphoserine. Over residues Ser264–Lys280 the composition is skewed to basic and acidic residues. Thr273 carries the phosphothreonine modification. Residues Val336–Glu349 form an important for interaction with RAB11A region. Ser344 and Ser346 each carry phosphoserine. Residues Thr351 and Thr403 each carry the phosphothreonine modification. Disordered regions lie at residues Ser399–Gln425 and Asp461–Tyr481. Ser405, Ser472, Ser473, and Ser474 each carry phosphoserine. Positions Asp469–Gly478 are enriched in acidic residues. Tyr481 is modified (phosphotyrosine). One copy of the WD 1 repeat lies at Glu511–Asn550. The segment at Glu559–Lys593 is disordered. 2 positions are modified to phosphoserine: Ser563 and Ser567. Residues Ser563–Lys575 are compositionally biased toward low complexity. 7 WD repeats span residues Gly607–Cys645, Gln647–Trp687, Gly692–Gln731, Lys742–Lys781, Val786–Thr825, Ala840–Asp880, and Thr882–Ser915.

Interacts with the GTP-bound form of RAB11 when membrane-associated. Interacts with GRAF1/ARHGAP26 or GRAF2/ARHGAP10; the interaction connects the endoplasmic reticulum (ER) with the endosomal tubule. Interacts (via FFAT-like motif) with VAPA (via MSP domain) or VAPB (via MSP domain); the interaction connects the ER with the endosomal tubule. Does not bind to other Rab and Rho small G proteins. In terms of processing, phosphorylated by ATK1; the phosphorylation stabilizes its interaction with RAB11A and RAB11B.

Its subcellular location is the cytoplasm. It is found in the cytosol. The protein localises to the perinuclear region. The protein resides in the endosome membrane. It localises to the golgi apparatus. Its subcellular location is the trans-Golgi network. Its function is as follows. Downstream effector for Rab11 which regulates Rab11 intracellular membrane trafficking functions such as endocytic recycling, intracellular ciliogenesis and protein export. ATK1-mediated phosphorylation of WDR44 induces binding to Rab11 which activates endocytic recycling of transferrin receptor back to the plasma membrane. When bound to Rab11, prevents the formation of the ciliogenic Rab11-Rabin8/RAB3IP-RAB11FIP3 complex, therefore inhibiting preciliary trafficking and ciliogenesis. Participates in neo-synthesized protein export by connecting the endoplasmic reticulum (ER) with the endosomal tubule via direct interactions with the integral ER proteins VAPA or VAPB and the endosomal protein GRAFs (GRAF1/ARHGAP26 or GRAF2/ARHGAP10), which facilitates the transfer of proteins such as E-cadherin, MPP14 and CFTR into a Rab8-Rab10-Rab11-dependent export route. This chain is WD repeat-containing protein 44, found in Mus musculus (Mouse).